We begin with the raw amino-acid sequence, 25 residues long: Spinigerin (25 aa).

It localises to the secreted. In terms of biological role, active against Gram-positive bacteria B.megaterium and M.luteus, Gram-negative bacteria E.coli SBS363 and D22, K.pneumoniae, S.typhimurium and P.aeruginosa, yeast C.albicans and filamentous fungi F.culmorum, N.crassa, N.hematococca and T.viridae. Inactive against Gram-positive bacteria B.subtilis, S.pyogenes, B.thuringiensis and S.aureus, Gram-negative bacteria E.cloacae and E.carotovora and filamentous fungus B.bassiana. This is Spinigerin from Pseudacanthotermes spiniger.